The sequence spans 353 residues: Photosystem II D2 protein (353 aa).

Residue T2 is modified to N-acetylthreonine. T2 is modified (phosphothreonine). Residues 41 to 61 (CAYFALGGWFTGTTFVTSWYT) form a helical membrane-spanning segment. H118 serves as a coordination point for chlorophyll a. A helical transmembrane segment spans residues 125–141 (GFMLRQFELARSVQLRP). Pheophytin a-binding residues include Q130 and N143. Residues 153–166 (VFVSVFLIYPLGQS) form a helical membrane-spanning segment. H198 contributes to the chlorophyll a binding site. Residues 208–228 (AALLCAIHGATVENTLFEDGD) form a helical membrane-spanning segment. Residues H215 and F262 each contribute to the a plastoquinone site. Residue H215 participates in Fe cation binding. H269 provides a ligand contact to Fe cation. Residues 279–295 (GLWMSALGVVGLALNLR) form a helical membrane-spanning segment.

Belongs to the reaction center PufL/M/PsbA/D family. In terms of assembly, PSII is composed of 1 copy each of membrane proteins PsbA, PsbB, PsbC, PsbD, PsbE, PsbF, PsbH, PsbI, PsbJ, PsbK, PsbL, PsbM, PsbT, PsbX, PsbY, PsbZ, Psb30/Ycf12, at least 3 peripheral proteins of the oxygen-evolving complex and a large number of cofactors. It forms dimeric complexes. Requires The D1/D2 heterodimer binds P680, chlorophylls that are the primary electron donor of PSII, and subsequent electron acceptors. It shares a non-heme iron and each subunit binds pheophytin, quinone, additional chlorophylls, carotenoids and lipids. There is also a Cl(-1) ion associated with D1 and D2, which is required for oxygen evolution. The PSII complex binds additional chlorophylls, carotenoids and specific lipids. as cofactor.

Its subcellular location is the plastid. The protein localises to the chloroplast thylakoid membrane. The enzyme catalyses 2 a plastoquinone + 4 hnu + 2 H2O = 2 a plastoquinol + O2. Functionally, photosystem II (PSII) is a light-driven water:plastoquinone oxidoreductase that uses light energy to abstract electrons from H(2)O, generating O(2) and a proton gradient subsequently used for ATP formation. It consists of a core antenna complex that captures photons, and an electron transfer chain that converts photonic excitation into a charge separation. The D1/D2 (PsbA/PsbD) reaction center heterodimer binds P680, the primary electron donor of PSII as well as several subsequent electron acceptors. D2 is needed for assembly of a stable PSII complex. In Populus deltoides (Eastern poplar), this protein is Photosystem II D2 protein.